The chain runs to 455 residues: ATP-dependent protease ATPase subunit HslU (455 aa).

Residues V23, 65–70, D266, E333, and R405 each bind ATP; that span reads GVGKTE.

The protein belongs to the ClpX chaperone family. HslU subfamily. In terms of assembly, a double ring-shaped homohexamer of HslV is capped on each side by a ring-shaped HslU homohexamer. The assembly of the HslU/HslV complex is dependent on binding of ATP.

The protein resides in the cytoplasm. In terms of biological role, ATPase subunit of a proteasome-like degradation complex; this subunit has chaperone activity. The binding of ATP and its subsequent hydrolysis by HslU are essential for unfolding of protein substrates subsequently hydrolyzed by HslV. HslU recognizes the N-terminal part of its protein substrates and unfolds these before they are guided to HslV for hydrolysis. This Xanthomonas campestris pv. campestris (strain 8004) protein is ATP-dependent protease ATPase subunit HslU.